Consider the following 125-residue polypeptide: Ino eighty subunit 5 (125 aa).

The residue at position 124 (threonine 124) is a Phosphothreonine.

In terms of assembly, component of the chromatin-remodeling INO80 complex, at least composed of ARP4, ARP5, ARP8, RVB1, RVB2, TAF14, NHP10, IES1, IES3, IES4, IES6, ACT1, IES2, IES5 and INO80.

It localises to the nucleus. This is Ino eighty subunit 5 (IES5) from Saccharomyces cerevisiae (strain ATCC 204508 / S288c) (Baker's yeast).